Reading from the N-terminus, the 84-residue chain is Acyl carrier protein (84 aa).

A Carrier domain is found at 1–75; the sequence is MIFQKIQEFI…DILEYIQQHV (75 aa). Residue Ser35 is modified to O-(pantetheine 4'-phosphoryl)serine.

Belongs to the acyl carrier protein (ACP) family. Post-translationally, 4'-phosphopantetheine is transferred from CoA to a specific serine of apo-ACP by AcpS. This modification is essential for activity because fatty acids are bound in thioester linkage to the sulfhydryl of the prosthetic group.

The protein localises to the cytoplasm. Its pathway is lipid metabolism; fatty acid biosynthesis. Its function is as follows. Carrier of the growing fatty acid chain in fatty acid biosynthesis. This chain is Acyl carrier protein, found in Phytoplasma mali (strain AT).